Consider the following 251-residue polypeptide: Probable transcriptional regulatory protein Francci3_1368 (251 aa).

This sequence belongs to the TACO1 family.

It localises to the cytoplasm. This Frankia casuarinae (strain DSM 45818 / CECT 9043 / HFP020203 / CcI3) protein is Probable transcriptional regulatory protein Francci3_1368.